The sequence spans 405 residues: Argininosuccinate synthase (405 aa).

ATP is bound by residues 10-18 (AYSGGLDTS) and Ala37. 2 residues coordinate L-citrulline: Tyr88 and Ser93. Residue Gly118 coordinates ATP. Residues Thr120, Asn124, and Asp125 each coordinate L-aspartate. Asn124 is an L-citrulline binding site. L-citrulline is bound by residues Arg128, Ser179, Ser188, Glu264, and Tyr276.

Belongs to the argininosuccinate synthase family. Type 1 subfamily. Homotetramer.

The protein resides in the cytoplasm. It catalyses the reaction L-citrulline + L-aspartate + ATP = 2-(N(omega)-L-arginino)succinate + AMP + diphosphate + H(+). It participates in amino-acid biosynthesis; L-arginine biosynthesis; L-arginine from L-ornithine and carbamoyl phosphate: step 2/3. The chain is Argininosuccinate synthase from Pseudomonas syringae pv. tomato (strain ATCC BAA-871 / DC3000).